The following is a 448-amino-acid chain: MPRKYFGTDGIRGTANTGHMTAETALRVGMAAGRVFRRGEHRHRVVIGKDTRLSGYMLEPALTAGFTSMGMDVFLFGPLPTPAVAMLTRSLRADLGVMISASHNSFEDNGIKLFGPDGFKLSDEVELAIEHHMDNGLADNLAGSRGLGRAKRIEDAQARYIEHVKHTFPKQQTLEGLRIVIDCANGAAYKVAPEVLWELGAEVVTVGTEPNGFNINEDCGSTAPERMCAAVLERRADIGIALDGDADRVIIADERGKVIDGDQIMGLVARHWKEMGTLSAPGIVATVMSNLGLERYLGSLGLDLVRTQVGDRYVVEHMREHGYNVGGEQSGHIVLKDFSTTGDGLIAALQVLAVLKAGDKPVSEICHLFDPLPQLLKNIRFKRGEPLKDKDVQEAIREGESRLGKTGRLVIRKSGTEPLIRVMGEGDDEKLVTSVVNDIAAVIEHNAA.

Residue Ser-102 is the Phosphoserine intermediate of the active site. Positions 102, 243, 245, and 247 each coordinate Mg(2+). Ser-102 is subject to Phosphoserine.

It belongs to the phosphohexose mutase family. The cofactor is Mg(2+). Activated by phosphorylation.

It catalyses the reaction alpha-D-glucosamine 1-phosphate = D-glucosamine 6-phosphate. Its function is as follows. Catalyzes the conversion of glucosamine-6-phosphate to glucosamine-1-phosphate. The protein is Phosphoglucosamine mutase of Parvibaculum lavamentivorans (strain DS-1 / DSM 13023 / NCIMB 13966).